The following is a 285-amino-acid chain: NAD kinase (285 aa).

Asp-68 acts as the Proton acceptor in catalysis. NAD(+)-binding positions include 68 to 69 (DG), 142 to 143 (ND), Arg-153, Arg-170, Asp-172, and Gln-242.

This sequence belongs to the NAD kinase family. A divalent metal cation serves as cofactor.

It localises to the cytoplasm. The enzyme catalyses NAD(+) + ATP = ADP + NADP(+) + H(+). Involved in the regulation of the intracellular balance of NAD and NADP, and is a key enzyme in the biosynthesis of NADP. Catalyzes specifically the phosphorylation on 2'-hydroxyl of the adenosine moiety of NAD to yield NADP. In Acidobacterium capsulatum (strain ATCC 51196 / DSM 11244 / BCRC 80197 / JCM 7670 / NBRC 15755 / NCIMB 13165 / 161), this protein is NAD kinase.